A 57-amino-acid polypeptide reads, in one-letter code: Protein 19.3 (57 aa).

The chain is Protein 19.3 from Escherichia coli (Bacteriophage T7).